A 396-amino-acid chain; its full sequence is Aspartate aminotransferase (396 aa).

3 residues coordinate L-aspartate: glycine 34, tryptophan 130, and asparagine 183. Lysine 246 is subject to N6-(pyridoxal phosphate)lysine. L-aspartate is bound at residue arginine 374.

The protein belongs to the class-I pyridoxal-phosphate-dependent aminotransferase family. Homodimer. The cofactor is pyridoxal 5'-phosphate.

The protein localises to the cytoplasm. The enzyme catalyses L-aspartate + 2-oxoglutarate = oxaloacetate + L-glutamate. This Escherichia coli (strain K12) protein is Aspartate aminotransferase (aspC).